We begin with the raw amino-acid sequence, 230 residues long: uncharacterized protein (230 aa).

The next 7 membrane-spanning stretches (helical) occupy residues 8 to 28 (SLILTALIGGIPSSTAVTMAF), 45 to 65 (SIILSWLVMFFRVIFYTFIIF), 72 to 92 (LVLLLLPYFALLLMFAIFLYL), 109 to 129 (PFSLSQAFTFGLIYSTISVIS), 141 to 161 (IYVLSFLSGIMDIDAITLLLA), 176 to 196 (MGILLAVMSNNLFKSGYAIIF), and 203 to 223 (IYFLFVALFTLIYTTTLLILF).

The protein to P.aeruginosa PA0043 and M.thermoautotrophicum MTH1451.

Its subcellular location is the cell membrane. This is an uncharacterized protein from Aquifex aeolicus (strain VF5).